The chain runs to 427 residues: cAMP-dependent protein kinase regulatory subunit (427 aa).

The segment at 38 to 184 (QFCSNFFIRK…RIKVSISNNF (147 aa)) is dimerization and phosphorylation. Residues 96–145 (TTHMGHPNDHGALHDDDDDPLEDEDDEEFDKFSTEPLPSLPPTNYNRGRR) are disordered. Residues 110–124 (DDDDDPLEDEDDEEF) show a composition bias toward acidic residues. The residue at position 147 (Ser147) is a Phosphoserine. Residues 185–300 (LFRN…FLSE), Glu250, Arg259, 303–422 (LLKS…YHAV), Glu372, and Arg381 contribute to the 3',5'-cyclic AMP site.

Belongs to the cAMP-dependent kinase regulatory chain family. Tetramer, composed of 2 regulatory (R) and 2 catalytic (C) subunits. In the presence of cAMP it dissociates into 2 active monomeric C subunits and an R dimer.

The polypeptide is cAMP-dependent protein kinase regulatory subunit (pkar) (Mucor circinelloides f. lusitanicus (Mucor racemosus var. lusitanicus)).